We begin with the raw amino-acid sequence, 483 residues long: MSYPQGYLYQPSASLALYSCPAYSTSVISGPRTDELGRSSSGSAFSPYAGSTAFTAPSPGYNSHLQYGADPAAAAAAAFSSYVGSPYDHTPGMAGSLGYHPYAAPLGSYPYGDPAYRKNATRDATATLKAWLNEHRKNPYPTKGEKIMLAIITKMTLTQVSTWFANARRRLKKENKMTWTPRNRSEDEEEEENIDLEKNDEDEPQKPEDKGDPEGPEAGGAEQKAASGCERLQGPPTPAGKETEGSLSDSDFKEPPSEGRLDALQGPPRTGGPSPAGPAAARLAEDPAPHYPAGAPAPGPHPAAGEVPPGPGGPSVIHSPPPPPPPAVLAKPKLWSLAEIATSSDKVKDGGGGNEGSPCPPCPGPIAGQALGGSRASPAPAPSRSPSAQCPFPGGTVLSRPLYYTAPFYPGYTNYGSFGHLHGHPGPGPGPTTGPGSHFNGLNQTVLNRADALAKDPKMLRSQSQLDLCKDSPYELKKGMSDI.

Positions 113–175 (DPAYRKNATR…NARRRLKKEN (63 aa)) form a DNA-binding region, homeobox; TALE-type. Disordered regions lie at residues 177–392 (MTWT…QCPF) and 423–442 (GHPGPGPGPTTGPGSHFNGL). The segment covering 186–203 (EDEEEEENIDLEKNDEDE) has biased composition (acidic residues). Basic and acidic residues-rich tracts occupy residues 204 to 213 (PQKPEDKGDP) and 250 to 261 (SDFKEPPSEGRL). Low complexity-rich tracts occupy residues 266–282 (GPPRTGGPSPAGPAAAR) and 374–388 (SRASPAPAPSRSPSA). Position 274 is a phosphoserine (S274). A Phosphoserine modification is found at S464.

This sequence belongs to the TALE/IRO homeobox family.

It localises to the nucleus. Its function is as follows. Establishes the cardiac repolarization gradient by its repressive actions on the KCND2 potassium-channel gene. Required for retinal cone bipolar cell differentiation. May regulate contrast adaptation in the retina and control specific aspects of visual function in circuits of the mammalian retina. Could be involved in the regulation of both the cell cycle and apoptosis in prostate cancer cells. Involved in craniofacial and gonadal development. Modulates the migration of progenitor cell populations in branchial arches and gonads by repressing CXCL12. The protein is Iroquois-class homeodomain protein IRX-5 (IRX5) of Homo sapiens (Human).